Consider the following 224-residue polypeptide: Peroxiredoxin-6 (224 aa).

Residues 5-169 (LLLGDEAPNF…ILRVVDSLQL (165 aa)) form the Thioredoxin domain. Positions 31-40 (DSWGILFSHP) are required and sufficient for targeting to lysosomes and lamellar bodies. Position 44 is a phosphothreonine (Thr-44). Catalysis depends on Cys-47, which acts as the Cysteine sulfenic acid (-SOH) intermediate; for peroxidase activity. Lys-63 bears the N6-acetyllysine mark. Tyr-89 is subject to Phosphotyrosine. The active-site For phospholipase activity is Asp-140. At Thr-177 the chain carries Phosphothreonine; by MAPK. Lys-209 bears the N6-acetyllysine; alternate mark. Residue Lys-209 is modified to N6-succinyllysine; alternate.

It belongs to the peroxiredoxin family. Prx6 subfamily. In terms of assembly, homodimer. Interacts with GSTP1; mediates PRDX6 glutathionylation and regeneration. Interacts with APEX1. Interacts with STH. May interact with FAM168B. May interact with HTR2A. In terms of processing, phosphorylation at Thr-177 by MAP kinases increases the phospholipase activity of the enzyme. Phosphorylated form exhibits a greater lysophosphatidylcholine acyltransferase activity compared to the non-phosphorylated form. Irreversibly inactivated by overoxidation of Cys-47 to sulfinic acid (Cys-SO(2)H) and sulfonic acid (Cys-SO(3)H) forms upon oxidative stress.

The protein resides in the cytoplasm. The protein localises to the lysosome. The catalysed reaction is a hydroperoxide + 2 glutathione = an alcohol + glutathione disulfide + H2O. It carries out the reaction a 1,2-diacyl-sn-glycero-3-phosphocholine + H2O = a 1-acyl-sn-glycero-3-phosphocholine + a fatty acid + H(+). It catalyses the reaction a 1-acyl-sn-glycero-3-phosphocholine + an acyl-CoA = a 1,2-diacyl-sn-glycero-3-phosphocholine + CoA. The enzyme catalyses 1-hexadecanoyl-sn-glycero-3-phosphocholine + hexadecanoyl-CoA = 1,2-dihexadecanoyl-sn-glycero-3-phosphocholine + CoA. The catalysed reaction is 1,2-dihexadecanoyl-sn-glycero-3-phosphocholine + H2O = 1-hexadecanoyl-sn-glycero-3-phosphocholine + hexadecanoate + H(+). In terms of biological role, thiol-specific peroxidase that catalyzes the reduction of hydrogen peroxide and organic hydroperoxides to water and alcohols, respectively. Can reduce H(2)O(2) and short chain organic, fatty acid, and phospholipid hydroperoxides. Also has phospholipase activity, can therefore either reduce the oxidized sn-2 fatty acyl group of phospholipids (peroxidase activity) or hydrolyze the sn-2 ester bond of phospholipids (phospholipase activity). These activities are dependent on binding to phospholipids at acidic pH and to oxidized phospholipds at cytosolic pH. Plays a role in cell protection against oxidative stress by detoxifying peroxides and in phospholipid homeostasis. Exhibits acyl-CoA-dependent lysophospholipid acyltransferase which mediates the conversion of lysophosphatidylcholine (1-acyl-sn-glycero-3-phosphocholine or LPC) into phosphatidylcholine (1,2-diacyl-sn-glycero-3-phosphocholine or PC). Shows a clear preference for LPC as the lysophospholipid and for palmitoyl CoA as the fatty acyl substrate. The protein is Peroxiredoxin-6 (Prdx6) of Rattus norvegicus (Rat).